Reading from the N-terminus, the 1115-residue chain is Integrin alpha-PS3 (1115 aa).

An N-terminal signal peptide occupies residues M1–A24. Topologically, residues F25–T1054 are extracellular. FG-GAP repeat units follow at residues K39–P99, S113–Q174, D193–P246, I278–I335, H336–E397, R398–D453, and D460–R522. N-linked (GlcNAc...) asparagine glycans are attached at residues N46, N82, and N166. An N-linked (GlcNAc...) asparagine glycan is attached at N438. Residues N696, N845, N868, and N964 are each glycosylated (N-linked (GlcNAc...) asparagine). The chain crosses the membrane as a helical span at residues G1055–I1075. At S1076–N1115 the chain is on the cytoplasmic side.

Belongs to the integrin alpha chain family. In terms of assembly, heterodimer of an alpha and a beta subunit. The alpha subunit is composed of a heavy and a light chain linked by a disulfide bond. Interacts with mys/beta-PS and Itgbn. As to expression, expressed in embryonic and larval hemocytes (at protein level). Expressed in tissues undergoing invagination, tissue movement and morphogenesis such as salivary gland, trachea, midgut endoderm, dorsal vessel, midline of the ventral nerve cord, amnioserosa and the amnioproctodeal invagination. Expressed in the mushroom body neuropil, brain areas that contain mushroom body processes in synaptic contact with other neurons. In egg chambers, expressed in border cells, in stretch cells and in dorsal appendage primordia.

The protein resides in the apical cell membrane. Its subcellular location is the lateral cell membrane. It is found in the cytoplasm. In terms of biological role, integrin alpha-PS3/beta-PS is a receptor for laminin. Also binds to wb. Important during embryogenesis for the development of the trachea, dorsal vessel and salivary gland, as well as for dorsal closure. Required for short-term memory processes. Minor involvement in the establishment of the oocyte anterior-posterior length. Plays a role in timely border cell migration during oogenesis, probably mediated by JNK signaling. Integrin alpha-PS3/Itgbn is required for effective phagocytosis of apoptotic cells during embryonic development and for the phagocytic elimination of S.aureus by mediating the binding of S.aureus peptidoglycan to larval hemocytes, which probably activates a signaling pathway involving Rac1 and Rac2. Integrin alpha-PS3/Itgbn also regulates Fak activity during neuromuscular junction (NMJ) growth and is required for its activation in presynapsis of NMJs. Seems to be dispensable for major morphogenetic processes. This chain is Integrin alpha-PS3 (scb), found in Drosophila melanogaster (Fruit fly).